The primary structure comprises 119 residues: Large ribosomal subunit protein uL24 (119 aa).

It belongs to the universal ribosomal protein uL24 family. Part of the 50S ribosomal subunit.

One of two assembly initiator proteins, it binds directly to the 5'-end of the 23S rRNA, where it nucleates assembly of the 50S subunit. Its function is as follows. One of the proteins that surrounds the polypeptide exit tunnel on the outside of the subunit. In Paenarthrobacter aurescens (strain TC1), this protein is Large ribosomal subunit protein uL24.